Reading from the N-terminus, the 171-residue chain is Myelin basic protein (171 aa).

Position 1 is an N-acetylalanine (alanine 1). Positions alanine 1 to serine 12 are enriched in basic residues. The tract at residues alanine 1 to arginine 171 is disordered. Phosphoserine occurs at positions 7 and 12. Tyrosine 14 is subject to Phosphotyrosine. The residue at position 19 (serine 19) is a Phosphoserine. Threonine 20 is subject to Phosphothreonine. A citrulline mark is found at arginine 25 and arginine 31. The residue at position 35 (threonine 35) is a Phosphothreonine. Phosphoserine is present on serine 39. Arginine 42 and arginine 48 each carry omega-N-methylarginine. A Phosphoserine modification is found at serine 55. Threonine 66 is subject to Phosphothreonine. At tyrosine 68 the chain carries Phosphotyrosine. 2 positions are modified to phosphothreonine: threonine 95 and threonine 98. Deamidated glutamine is present on glutamine 103. Arginine 107 carries the post-translational modification Omega-N-methylarginine; alternate. Arginine 107 carries the symmetric dimethylarginine; alternate modification. Serine 115 carries the phosphoserine modification. Position 122 is an N6-acetyllysine (lysine 122). A Citrulline modification is found at arginine 130. Position 148 is a deamidated glutamine (glutamine 148). Citrulline is present on arginine 160. Serine 162 carries the post-translational modification Phosphoserine. At serine 166 the chain carries Phosphoserine; by UHMK1. Arginine 171 bears the Citrulline mark.

It belongs to the myelin basic protein family. As to quaternary structure, homodimer. Post-translationally, as in other animals, several charge isomers may be produced as a result of optional post-translational modifications, such as phosphorylation of serine or threonine residues, deamidation of glutamine or asparagine residues, citrullination and methylation of arginine residues. In terms of processing, phosphorylated by TAOK2, VRK2, MAPK11, MAPK12, MAPK14 and MINK1. Proteolytically cleaved in B cell lysosomes by cathepsin CTSG which degrades the major immunogenic MBP epitope and prevents the activation of MBP-specific autoreactive T cells.

It is found in the myelin membrane. Functionally, is, with PLP, the most abundant protein component of the myelin membrane in the CNS. Has a role in both the formation and stabilization of this compact multilayer arrangement of bilayers. Each splice variant and charge isomer may have a specialized function in the assembly of an optimized, biochemically functional myelin membrane. The sequence is that of Myelin basic protein (MBP) from Sus scrofa (Pig).